Reading from the N-terminus, the 507-residue chain is TOM1-like protein 2 (507 aa).

Positions 20–152 (ATDGSLQSED…ELKRRGIEFP (133 aa)) constitute a VHS domain. The residue at position 160 (serine 160) is a Phosphoserine. Residue threonine 164 is modified to Phosphothreonine. Residues 164–200 (TPQRSVPEMDPAATIPRSQTQPRTTAGTYSSPPPASY) are disordered. Positions 219–307 (EQIARLRSEL…VFLRYERFER (89 aa)) constitute a GAT domain. The Clathrin-binding motif lies at 329–334 (NLIDLG). The segment at 466–507 (ERAKAAETVPDLPSPPTEAPAPASNTSTRKKPERSDDALFAL) is disordered. The span at 498 to 507 (ERSDDALFAL) shows a compositional bias: basic and acidic residues.

It belongs to the TOM1 family. As to quaternary structure, interacts with clathrin, SRC and TOLLIP. Interacts with MYO6. In terms of tissue distribution, ubiquitously expressed. Splicing pattern displays tissue specific variation.

Functionally, acts as a MYO6/Myosin VI adapter protein that targets myosin VI to endocytic structures. May also play a role in recruiting clathrin to endosomes. May regulate growth factor-induced mitogenic signaling. The sequence is that of TOM1-like protein 2 (Tom1l2) from Mus musculus (Mouse).